We begin with the raw amino-acid sequence, 853 residues long: MLQTKNLIWTLFFLGTAVSLQVDIVPSQGEISVGESKFFLCQVAGDAKDKDISWFSPNGEKLTPNQQRISVVWNDDSSSTLTIYNANIDDAGIYKCVVTAEDGTESEATVNVKIFQKLMFKNAPTPQEFREGEDAVIVCDVVSSLPPTIIWKHKGRDVILKKDVRFIVLTNNYLQIRGIKKTDEGTYRCEGRILARGEINFKDIQVIVNVPPTVQARQSIVNATANLGQSVTLVCNAEGFPEPTVSWTKDGEQIENEEDEKYLFSDDSSELTIRKVDKNDEAEYVCIAENKAGEQDASIHLKVFAKPKITYVENQTAMELEEQVTLTCEASGDPIPSITWRTSTRNISSEEKASWTRPEKQETLDGHMVVRSHARVSSLTLKSIQYTDAGEYVCTASNTIGQDSQSMYLEVQYAPKLQGPVAVYTWEGNQVNITCEVFAYPSATISWFRDGQLLPSSNYSNIKIYNTPSASYLEVTPDSENDFGNYNCTAVNRIGQESLEFVLVQADTPSSPSIDQVEPYSSTAQVQFDEPEATGGVPILKYKAEWRAMGEEVWHSKWYDAKEASMEGIVTIVGLKPETTYAVRLAALNGKGLGEISAASEFKTQPVREPSAPKLEGQMGEDGNSIKVKLIKQDDGGSPIRHYLVKYRALSSEWKPEIRLPSGSDHVMLKSLDWNAEYEVYVVAENQQGKSKAAHFVFRTSAQPTAIPANGSPTSGLSTGAIVGILVVTFVLLLVAVDVTCYFLNKCGLLMCIAVNLCGKAGPGAKGKDMEEGKAAFSKDESKEPIVEVRTEEERTPNHDGGKHTEPNETTPLTEPEKGPVEAKPETETKPAPAEVQTVPNDATQIKVNESKA.

The first 19 residues, 1–19 (MLQTKNLIWTLFFLGTAVS), serve as a signal peptide directing secretion. Ig-like C2-type domains are found at residues 20 to 111 (LQVD…ATVN), 116 to 205 (QKLM…KDIQ), 212 to 300 (PTVQ…ASIH), 307 to 412 (PKIT…LEVQ), and 415 to 500 (PKLQ…ESLE). The Extracellular segment spans residues 20-719 (LQVDIVPSQG…NGSPTSGLST (700 aa)). 2 cysteine pairs are disulfide-bonded: Cys-41–Cys-96 and Cys-139–Cys-189. Heparin contacts are provided by residues 152 to 156 (KHKGR) and 161 to 165 (KKDVR). Residue Asn-222 is glycosylated (N-linked (GlcNAc...) asparagine). A disulfide bond links Cys-235 and Cys-286. N-linked (GlcNAc...) asparagine glycans are attached at residues Asn-314, Asn-346, Asn-432, Asn-458, and Asn-487. An intrachain disulfide couples Cys-328 to Cys-394. A disulfide bridge links Cys-435 with Cys-488. 2 consecutive Fibronectin type-III domains span residues 508-607 (TPSS…TQPV) and 609-704 (EPSA…SAQP). Residues 720 to 737 (GAIVGILVVTFVLLLVAV) form a helical membrane-spanning segment. The Cytoplasmic portion of the chain corresponds to 738–853 (DVTCYFLNKC…TQIKVNESKA (116 aa)). The disordered stretch occupies residues 764-853 (GAKGKDMEEG…TQIKVNESKA (90 aa)). Composition is skewed to basic and acidic residues over residues 766-807 (KGKD…HTEP) and 815-829 (EPEK…ETET). 2 positions are modified to phosphoserine: Ser-778 and Ser-782. Residues 838-853 (TVPNDATQIKVNESKA) show a composition bias toward polar residues.

In terms of assembly, interacts with MDK. Found in a complex with SLC39A6, SLC39A10 and with NCAM1; this complex controls NCAM1 phosphorylation and integration into focal adhesion complexes during epithelial-tomesenchymal transition. Interacts with synaptic plasticity regulator PANTS. In terms of processing, polysialylated by ST8SIA2 and ST8SIA4. Polysialylation modulates cell interactions by confering both attractive and repulsive properties that are highly regulated by ST8SIA2 and ST8SIA4. Polysialylation is formed on a-2,3-linked sialic acid of core glycans.

The protein localises to the cell membrane. Functionally, this protein is a cell adhesion molecule involved in neuron-neuron adhesion, neurite fasciculation, outgrowth of neurites, etc. In Bos taurus (Bovine), this protein is Neural cell adhesion molecule 1.